The sequence spans 585 residues: Arginine--tRNA ligase (585 aa).

The short motif at 127 to 137 (PNTNKPLHVGH) is the 'HIGH' region element.

The protein belongs to the class-I aminoacyl-tRNA synthetase family. As to quaternary structure, monomer.

It localises to the cytoplasm. The catalysed reaction is tRNA(Arg) + L-arginine + ATP = L-arginyl-tRNA(Arg) + AMP + diphosphate. In Borrelia garinii subsp. bavariensis (strain ATCC BAA-2496 / DSM 23469 / PBi) (Borreliella bavariensis), this protein is Arginine--tRNA ligase.